The primary structure comprises 302 residues: L-threonate dehydrogenase (302 aa).

NAD(+) is bound by residues 7–35 (FHVGIVGLGSMGMGAALSCVRAGLSTWGA) and Thr102. Residue Lys178 is part of the active site. Residue Lys246 participates in NAD(+) binding.

This sequence belongs to the HIBADH-related family. L-threonate dehydrogenase subfamily.

The catalysed reaction is L-threonate + NAD(+) = 2-dehydro-L-erythronate + NADH + H(+). Its function is as follows. Catalyzes oxidation of L-threonate to 2-oxo-tetronate. Can use either NAD(+) or NADP(+) as cosubstrate, with a preference for NAD(+). This is L-threonate dehydrogenase from Escherichia coli O6:H1 (strain CFT073 / ATCC 700928 / UPEC).